An 87-amino-acid chain; its full sequence is Putative acyl-CoA-binding protein (87 aa).

An ACB domain is found at 1 to 86; that stretch reads MSSTFEQAAA…VDELKTKYGM (86 aa). Residues lysine 13, 28-32, lysine 50, lysine 54, and tyrosine 73 each bind an acyl-CoA; that span reads YALFK.

The protein belongs to the ACBP family.

The protein resides in the cytoplasm. It localises to the nucleus. In terms of biological role, binds medium- and long-chain acyl-CoA esters with very high affinity and may function as an intracellular carrier of acyl-CoA esters. May enhance the activity of the ceramide synthase complex. This is Putative acyl-CoA-binding protein from Schizosaccharomyces pombe (strain 972 / ATCC 24843) (Fission yeast).